The primary structure comprises 757 residues: Xylosyl- and glucuronyltransferase LARGE1 (757 aa).

Topologically, residues 1–10 (MLGMCRGRRK) are cytoplasmic. A helical; Signal-anchor for type II membrane protein membrane pass occupies residues 11 to 31 (FVAASLALIFIPALTWLYLSS). The Lumenal portion of the chain corresponds to 32–757 (ANITVKPLPL…LKYMTVDNNS (726 aa)). Positions 50-82 (AVVGAAAEHQSLELRLRDVEEHNNALRREISRT) form a coiled coil. Positions 76-127 (RREISRTPRVPTHSSHPSSSRHGNQLHTHSTEEGTGDSEAKKGAAAGNSSDC) are disordered. Low complexity predominate over residues 82–97 (TPRVPTHSSHPSSSRH). Residues Asn-123 and Asn-149 are each glycosylated (N-linked (GlcNAc...) asparagine). The xylosyltransferase activity stretch occupies residues 139 to 414 (IHIAIVCAGY…FLEYDGNLLR (276 aa)). Residues Asp-243 and Asp-245 each coordinate Mn(2+). An N-linked (GlcNAc...) asparagine glycan is attached at Asn-273. Residues 415–757 (RELFGCPSET…LKYMTVDNNS (343 aa)) are glucuronyltransferase activity. Mn(2+) contacts are provided by Asp-564 and Asp-566. An N-linked (GlcNAc...) asparagine glycan is attached at Asn-738.

It in the C-terminal section; belongs to the glycosyltransferase 49 family. The protein in the N-terminal section; belongs to the glycosyltransferase 8 family. The cofactor is Mn(2+).

Its subcellular location is the golgi apparatus membrane. The catalysed reaction is 3-O-[beta-D-GlcA-(1-&gt;3)-beta-D-Xyl-(1-&gt;4)-Rib-ol-P-Rib-ol-P-3-beta-D-GalNAc-(1-&gt;3)-beta-D-GlcNAc-(1-&gt;4)-(O-6-P-alpha-D-Man)]-Thr-[protein] + UDP-alpha-D-xylose = 3-O-[alpha-D-Xyl-(1-&gt;3)-beta-D-GlcA-(1-&gt;4)-beta-D-Xyl-(1-&gt;4)-Rib-ol-P-Rib-ol-P-3-beta-D-GalNAc-(1-&gt;3)-beta-D-GlcNAc-(1-&gt;4)-(O-6-P-alpha-D-Man)]-Thr-[protein] + UDP + H(+). It carries out the reaction 3-O-{(1-&gt;[3)-alpha-D-Xyl-(1-&gt;3)-beta-D-GlcA-(1-&gt;](n)-4)-beta-D-Xyl-(1-&gt;4)-Rib-ol-P-Rib-ol-P-3-beta-D-GalNAc-(1-&gt;3)-beta-D-GlcNAc-(1-&gt;4)-O-6-P-alpha-D-Man}-L-Thr-[protein] + UDP-alpha-D-glucuronate = 3-O-{beta-D-GlcA-(1-&gt;[3)-alpha-D-Xyl-(1-&gt;3)-beta-D-GlcA-(1-&gt;](n)-4)-beta-D-Xyl-(1-&gt;4)-Rib-ol-P-Rib-ol-P-3-beta-D-GalNAc-(1-&gt;3)-beta-D-GlcNAc-(1-&gt;4)-O-6-P-alpha-D-Man}-L-Thr-[protein] + UDP + H(+). The enzyme catalyses 3-O-{beta-D-GlcA-(1-&gt;[3)-alpha-D-Xyl-(1-&gt;3)-beta-D-GlcA-(1-&gt;](n)-4)-beta-D-Xyl-(1-&gt;4)-Rib-ol-P-Rib-ol-P-3-beta-D-GalNAc-(1-&gt;3)-beta-D-GlcNAc-(1-&gt;4)-O-6-P-alpha-D-Man}-L-Thr-[protein] + UDP-alpha-D-xylose = 3-O-{(1-&gt;[3)-alpha-D-Xyl-(1-&gt;3)-beta-D-GlcA-(1-&gt;](n+1)-4)-beta-D-Xyl-(1-&gt;4)-Rib-ol-P-Rib-ol-P-3-beta-D-GalNAc-(1-&gt;3)-beta-D-GlcNAc-(1-&gt;4)-O-6-P-alpha-D-Man}-L-Thr-[protein] + UDP + H(+). It functions in the pathway protein modification; protein glycosylation. In terms of biological role, bifunctional glycosyltransferase with both alpha-1,3-xylosyltransferase and beta-1,3-glucuronyltransferase activities involved in the maturation of alpha-dystroglycan (DAG1) by glycosylation leading to DAG1 binding to laminin G-like domain-containing extracellular proteins with high affinity. Elongates the glucuronyl-beta-1,4-xylose-beta disaccharide primer structure initiated by B4GAT1 by adding repeating units [-3-Xylose-alpha-1,3-GlcA-beta-1-] to produce a heteropolysaccharide. Requires the phosphorylation of core M3 (O-mannosyl trisaccharide) by POMK to elongate the glucuronyl-beta-1,4-xylose-beta disaccharide primer. Plays a key role in skeletal muscle function and regeneration. The protein is Xylosyl- and glucuronyltransferase LARGE1 of Danio rerio (Zebrafish).